Consider the following 83-residue polypeptide: Small ribosomal subunit protein bS20 (83 aa).

The protein belongs to the bacterial ribosomal protein bS20 family.

Functionally, binds directly to 16S ribosomal RNA. The chain is Small ribosomal subunit protein bS20 from Leuconostoc mesenteroides subsp. mesenteroides (strain ATCC 8293 / DSM 20343 / BCRC 11652 / CCM 1803 / JCM 6124 / NCDO 523 / NBRC 100496 / NCIMB 8023 / NCTC 12954 / NRRL B-1118 / 37Y).